The chain runs to 432 residues: Neuronal pentraxin-1 (432 aa).

Residues 1–22 (MLAGRAARTCALLALCLLGSRA) form the signal peptide. The segment at 90–128 (ESQSTLDAGPGEARSGGGRKQPGSGKNTMGDLSRTPASE) is disordered. N-linked (GlcNAc...) asparagine glycans are attached at residues Asn154 and Asn193. A Pentraxin (PTX) domain is found at 226–428 (DKFQLTFPLR…GATKWTFEAC (203 aa)). An intrachain disulfide couples Cys256 to Cys316. Residues Asn280, Glu358, Gln359, Asp360, and Gln370 each contribute to the Ca(2+) site.

As to quaternary structure, homooligomer or heterooligomer (probably pentamer) with neuronal pentraxin receptor (NPTXR). Ca(2+) serves as cofactor. Glycosylated. In terms of tissue distribution, cerebellum, hippocampus and cerebral cortex.

The protein resides in the secreted. It localises to the cytoplasmic vesicle. The protein localises to the secretory vesicle. Its subcellular location is the endoplasmic reticulum. May be involved in mediating uptake of synaptic material during synapse remodeling or in mediating the synaptic clustering of AMPA glutamate receptors at a subset of excitatory synapses. The polypeptide is Neuronal pentraxin-1 (Nptx1) (Rattus norvegicus (Rat)).